Here is a 31-residue protein sequence, read N- to C-terminus: Kalata-B9 (31 aa).

A cross-link (cyclopeptide (Gly-Asp)) is located at residues 1–31 (GSVFNCGETCVLGTCYTPGCTCNTYRVCTKD). 3 disulfide bridges follow: cysteine 6–cysteine 20, cysteine 10–cysteine 22, and cysteine 15–cysteine 28.

It belongs to the cyclotide family. Bracelet subfamily. In terms of processing, this peptide occurs in both cyclic and linear forms.

In terms of biological role, probably participates in a plant defense mechanism. The protein is Kalata-B9 of Oldenlandia affinis.